The sequence spans 359 residues: Peptide chain release factor 1 (359 aa).

An N5-methylglutamine modification is found at glutamine 236. Positions 286 to 305 (KKEMERSTMRKSQIGSGDRS) are disordered.

This sequence belongs to the prokaryotic/mitochondrial release factor family. In terms of processing, methylated by PrmC. Methylation increases the termination efficiency of RF1.

The protein localises to the cytoplasm. Peptide chain release factor 1 directs the termination of translation in response to the peptide chain termination codons UAG and UAA. The chain is Peptide chain release factor 1 from Wolbachia pipientis wMel.